The chain runs to 225 residues: F-box protein SKIP27 (225 aa).

The F-box domain occupies Lys121 to Thr169.

In terms of assembly, part of a SCF (ASK-cullin-F-box) protein ligase complex. Interacts with SKP1A/ASK1 and SPK1B/ASK2.

Its subcellular location is the nucleus. The protein operates within protein modification; protein ubiquitination. Functionally, component of SCF(ASK-cullin-F-box) E3 ubiquitin ligase complexes, which may mediate the ubiquitination and subsequent proteasomal degradation of target proteins. This chain is F-box protein SKIP27 (SKIP27), found in Arabidopsis thaliana (Mouse-ear cress).